A 126-amino-acid polypeptide reads, in one-letter code: Large ribosomal subunit protein uL22 (126 aa).

Belongs to the universal ribosomal protein uL22 family. Part of the 50S ribosomal subunit.

Its function is as follows. This protein binds specifically to 23S rRNA; its binding is stimulated by other ribosomal proteins, e.g. L4, L17, and L20. It is important during the early stages of 50S assembly. It makes multiple contacts with different domains of the 23S rRNA in the assembled 50S subunit and ribosome. Functionally, the globular domain of the protein is located near the polypeptide exit tunnel on the outside of the subunit, while an extended beta-hairpin is found that lines the wall of the exit tunnel in the center of the 70S ribosome. This is Large ribosomal subunit protein uL22 from Rhodospirillum rubrum (strain ATCC 11170 / ATH 1.1.1 / DSM 467 / LMG 4362 / NCIMB 8255 / S1).